A 241-amino-acid chain; its full sequence is Small ribosomal subunit protein uS3 (241 aa).

The KH type-2 domain occupies 39–107 (IREILHKELK…DVVINIVEIR (69 aa)). The disordered stretch occupies residues 217–241 (KRMAEGETGGGGDRGGRQRRDNAAV). Basic and acidic residues predominate over residues 230–241 (RGGRQRRDNAAV).

This sequence belongs to the universal ribosomal protein uS3 family. In terms of assembly, part of the 30S ribosomal subunit. Forms a tight complex with proteins S10 and S14.

In terms of biological role, binds the lower part of the 30S subunit head. Binds mRNA in the 70S ribosome, positioning it for translation. The chain is Small ribosomal subunit protein uS3 from Bradyrhizobium diazoefficiens (strain JCM 10833 / BCRC 13528 / IAM 13628 / NBRC 14792 / USDA 110).